A 352-amino-acid polypeptide reads, in one-letter code: N-acetyl-gamma-glutamyl-phosphate reductase (352 aa).

The active site involves Cys-155.

This sequence belongs to the NAGSA dehydrogenase family. Type 1 subfamily.

The protein localises to the cytoplasm. The catalysed reaction is N-acetyl-L-glutamate 5-semialdehyde + phosphate + NADP(+) = N-acetyl-L-glutamyl 5-phosphate + NADPH + H(+). It participates in amino-acid biosynthesis; L-arginine biosynthesis; N(2)-acetyl-L-ornithine from L-glutamate: step 3/4. Catalyzes the NADPH-dependent reduction of N-acetyl-5-glutamyl phosphate to yield N-acetyl-L-glutamate 5-semialdehyde. This chain is N-acetyl-gamma-glutamyl-phosphate reductase, found in Synechococcus elongatus (strain ATCC 33912 / PCC 7942 / FACHB-805) (Anacystis nidulans R2).